A 281-amino-acid polypeptide reads, in one-letter code: NAD-dependent protein deacetylase 1 (281 aa).

Residues 1-281 (MEEGAALEGV…FDQILDALDL (281 aa)) form the Deacetylase sirtuin-type domain. NAD(+)-binding positions include 24-44 (GAGV…GSLN) and 102-105 (QNVD). Catalysis depends on His120, which acts as the Proton acceptor. Cys128, Cys131, Cys183, and Cys186 together coordinate Zn(2+). Residues 224–226 (GSS), 250–252 (NGG), and Val268 contribute to the NAD(+) site.

The protein belongs to the sirtuin family. Class II subfamily. The cofactor is Zn(2+).

The protein localises to the cytoplasm. It carries out the reaction N(6)-acetyl-L-lysyl-[protein] + NAD(+) + H2O = 2''-O-acetyl-ADP-D-ribose + nicotinamide + L-lysyl-[protein]. NAD-dependent protein deacetylase which modulates the activities of several enzymes which are inactive in their acetylated form. This Corynebacterium efficiens (strain DSM 44549 / YS-314 / AJ 12310 / JCM 11189 / NBRC 100395) protein is NAD-dependent protein deacetylase 1.